Consider the following 208-residue polypeptide: Glutathione S-transferase 1-1 (208 aa).

The 80-residue stretch at 1 to 80 (MDFYYLPGSA…YLVEKYGKND (80 aa)) folds into the GST N-terminal domain. Residues Ser9, 50-52 (HTI), and 64-66 (ESR) contribute to the glutathione site. The GST C-terminal domain occupies 86–207 (CPKKRAVINQ…EGCLEFKKFF (122 aa)).

The protein belongs to the GST superfamily. Theta family. In terms of assembly, homodimer.

It carries out the reaction RX + glutathione = an S-substituted glutathione + a halide anion + H(+). Conjugation of reduced glutathione to a wide number of exogenous and endogenous hydrophobic electrophiles. The chain is Glutathione S-transferase 1-1 (GST1) from Lucilia cuprina (Green bottle fly).